The following is a 210-amino-acid chain: Guanylate kinase (210 aa).

The Guanylate kinase-like domain occupies 6–186 (GVILVLSSPS…TADRISNILR (181 aa)). 13 to 20 (SPSGCGKT) lines the ATP pocket.

Belongs to the guanylate kinase family.

The protein resides in the cytoplasm. The enzyme catalyses GMP + ATP = GDP + ADP. Essential for recycling GMP and indirectly, cGMP. The sequence is that of Guanylate kinase from Anaplasma phagocytophilum (strain HZ).